Here is a 210-residue protein sequence, read N- to C-terminus: Probable septum site-determining protein MinC (210 aa).

The protein belongs to the MinC family. Interacts with MinD and FtsZ.

In terms of biological role, cell division inhibitor that blocks the formation of polar Z ring septums. Rapidly oscillates between the poles of the cell to destabilize FtsZ filaments that have formed before they mature into polar Z rings. Prevents FtsZ polymerization. The sequence is that of Probable septum site-determining protein MinC from Clostridium novyi (strain NT).